Consider the following 78-residue polypeptide: Large ribosomal subunit protein bL28 (78 aa).

The tract at residues 1–23 is disordered; the sequence is MSRVCQVTGKRPITGNNVSHSKR.

Belongs to the bacterial ribosomal protein bL28 family.

The polypeptide is Large ribosomal subunit protein bL28 (Marinomonas sp. (strain MWYL1)).